A 389-amino-acid polypeptide reads, in one-letter code: Succinate--CoA ligase [ADP-forming] subunit beta (389 aa).

The region spanning 9–246 (KEILRRHNAN…ITEEDPYEVK (238 aa)) is the ATP-grasp domain. ATP is bound by residues lysine 48, 55–57 (GRG), glutamate 101, leucine 104, and glutamate 109. The Mg(2+) site is built by asparagine 201 and aspartate 215. Substrate is bound by residues asparagine 266 and 323 to 325 (GIV).

This sequence belongs to the succinate/malate CoA ligase beta subunit family. As to quaternary structure, heterotetramer of two alpha and two beta subunits. Mg(2+) is required as a cofactor.

The enzyme catalyses succinate + ATP + CoA = succinyl-CoA + ADP + phosphate. The catalysed reaction is GTP + succinate + CoA = succinyl-CoA + GDP + phosphate. It functions in the pathway carbohydrate metabolism; tricarboxylic acid cycle; succinate from succinyl-CoA (ligase route): step 1/1. In terms of biological role, succinyl-CoA synthetase functions in the citric acid cycle (TCA), coupling the hydrolysis of succinyl-CoA to the synthesis of either ATP or GTP and thus represents the only step of substrate-level phosphorylation in the TCA. The beta subunit provides nucleotide specificity of the enzyme and binds the substrate succinate, while the binding sites for coenzyme A and phosphate are found in the alpha subunit. The protein is Succinate--CoA ligase [ADP-forming] subunit beta of Leptospira biflexa serovar Patoc (strain Patoc 1 / Ames).